Consider the following 131-residue polypeptide: SPbeta prophage-derived UPF0715 membrane protein YopD (131 aa).

A run of 4 helical transmembrane segments spans residues 12–32 (VYTL…YLFV), 38–58 (AIAL…YLVF), 75–95 (LINF…FWFV), and 108–128 (FEYY…DSIF).

Belongs to the UPF0715 family.

It is found in the cell membrane. This Bacillus subtilis (strain 168) protein is SPbeta prophage-derived UPF0715 membrane protein YopD (yopD).